Reading from the N-terminus, the 430-residue chain is Asparagine--tRNA ligase (430 aa).

This sequence belongs to the class-II aminoacyl-tRNA synthetase family. In terms of assembly, homodimer.

The protein localises to the cytoplasm. It catalyses the reaction tRNA(Asn) + L-asparagine + ATP = L-asparaginyl-tRNA(Asn) + AMP + diphosphate + H(+). This Oceanobacillus iheyensis (strain DSM 14371 / CIP 107618 / JCM 11309 / KCTC 3954 / HTE831) protein is Asparagine--tRNA ligase.